A 633-amino-acid polypeptide reads, in one-letter code: MDKERISYHESVQKMYERIKKDNMTNVWDRYEAQGIGGVPDRRCTFCMAGARCDLCSNGPCRSDAAKDKRGVCGITADGMAMRMMLLRNVMGASTYHYHTDQTIRTLRETAKGKTPYSIREPEKLRTFAGRLGIETLGSDSEIALYLCEFVEKDFNRPAYEPSRIVEILAPPERKKRWEELDIFPGGIYGEMMLSTSSCLTNVDGYYASLALKAMRLGIAMAYQSQIVNEYCQDILFGIPKPHTMRVDLGVLDPEYVNVLPNGHEPFLGFAMVQLARKPEWQEKAKAAGAKGLRVIASIETGQEMIQRWEEDDAFYGFTGNWISQEAVLASGSVDLFAADMNCSLPVAPLYAEKYGFKLMPVSELIAFEDITERLNYNPVEAGRQAAKLLNMAVENFKNRKNSGEPVLNLPVKEAVVGFSTESILDALGGTLDPLLDAIKSGAIKGVVGMVSCTTLRDYGQDVHSVAVVKELIKRNILVLSLGCGNGAMQVAGLCSPETREFAGDSLKAVCEALGVPPVLSYGTCTDTGRLADFLGAISAVMGVPIPDLPIAAAAPEYMEQKATIDAIFALALGLYTYVNPVPTVTGAPDLVKLLTEDCREVTGGVLNVEKDAVKAVDGIEQHIMEKRKKLGI.

[4Fe-4S] cluster is bound by residues C44, C53, C56, C61, and C73. H264, C343, C453, C484, and C525 together coordinate [Ni-4Fe-5S] cluster.

This sequence belongs to the Ni-containing carbon monoxide dehydrogenase family. In terms of assembly, homodimer. [4Fe-4S] cluster is required as a cofactor. Requires [Ni-4Fe-5S] cluster as cofactor.

The enzyme catalyses CO + 2 oxidized [2Fe-2S]-[ferredoxin] + H2O = 2 reduced [2Fe-2S]-[ferredoxin] + CO2 + 2 H(+). Its function is as follows. CODH oxidizes carbon monoxide coupled, via CooF, to the reduction of a hydrogen cation by a hydrogenase (possibly CooH). This chain is Carbon monoxide dehydrogenase 2 (cooS2), found in Methanosarcina acetivorans (strain ATCC 35395 / DSM 2834 / JCM 12185 / C2A).